The chain runs to 329 residues: Biotin synthase (329 aa).

Residues 38–262 (NTIQVSTLLS…IMPHSYIRLS (225 aa)) form the Radical SAM core domain. Residues Cys-53, Cys-57, and Cys-60 each contribute to the [4Fe-4S] cluster site. The [2Fe-2S] cluster site is built by Cys-97, Cys-128, Cys-188, and Arg-260.

Belongs to the radical SAM superfamily. Biotin synthase family. Homodimer. The cofactor is [4Fe-4S] cluster. [2Fe-2S] cluster serves as cofactor.

The catalysed reaction is (4R,5S)-dethiobiotin + (sulfur carrier)-SH + 2 reduced [2Fe-2S]-[ferredoxin] + 2 S-adenosyl-L-methionine = (sulfur carrier)-H + biotin + 2 5'-deoxyadenosine + 2 L-methionine + 2 oxidized [2Fe-2S]-[ferredoxin]. It functions in the pathway cofactor biosynthesis; biotin biosynthesis; biotin from 7,8-diaminononanoate: step 2/2. Functionally, catalyzes the conversion of dethiobiotin (DTB) to biotin by the insertion of a sulfur atom into dethiobiotin via a radical-based mechanism. The polypeptide is Biotin synthase (Acinetobacter baumannii (strain SDF)).